We begin with the raw amino-acid sequence, 517 residues long: MGRLVLLSVSDKTGLIELARQLVEEFEFEIISSGGTAKSLQDAGIPVIKVGDYTGSPEILGGRVKTLHPRIHGGILARRDVPQDLKDLDANNIRPLDLVVVNLYPFEQTIAKDNVTVAQAIEQIDIGGPAMLRATAKNFAHLTVLCNPKYYQPYLEELRQHNGETSLAFRQKMAGETFALTNAYDQAIASYFASLTPEATENPLPTRFSVAGLELQSLRYGENPHQSASWYQSGTQPTGWTAATKLQGKELSYNNLVDLEAARRIIVEFDRSEPSCAILKHTNPCGVAVGTTLAEAYNKAFNADSMSAFGGIVALNQPIDPETAKALTKTFLECVVAPGCDEEAQKILSAKSNVRVLILPDLRSGPKQTVKVIAGGLLVQASDDALDNPETWQVVTEKQPTPEMMAELLFGWKVAKHVKSNAIVVSKNRTTLGVGAGQMNRVGSVKIALETAGEAAKGGYLASDGFFPFDDSVRTAAAAGITGIIQPGGSLKDKDSIKAANELGLVMVLTGMRHFLH.

In terms of domain architecture, MGS-like spans 1 to 146 (MGRLVLLSVS…KNFAHLTVLC (146 aa)).

Belongs to the PurH family.

The catalysed reaction is (6R)-10-formyltetrahydrofolate + 5-amino-1-(5-phospho-beta-D-ribosyl)imidazole-4-carboxamide = 5-formamido-1-(5-phospho-D-ribosyl)imidazole-4-carboxamide + (6S)-5,6,7,8-tetrahydrofolate. It catalyses the reaction IMP + H2O = 5-formamido-1-(5-phospho-D-ribosyl)imidazole-4-carboxamide. It functions in the pathway purine metabolism; IMP biosynthesis via de novo pathway; 5-formamido-1-(5-phospho-D-ribosyl)imidazole-4-carboxamide from 5-amino-1-(5-phospho-D-ribosyl)imidazole-4-carboxamide (10-formyl THF route): step 1/1. Its pathway is purine metabolism; IMP biosynthesis via de novo pathway; IMP from 5-formamido-1-(5-phospho-D-ribosyl)imidazole-4-carboxamide: step 1/1. This is Bifunctional purine biosynthesis protein PurH from Gloeothece citriformis (strain PCC 7424) (Cyanothece sp. (strain PCC 7424)).